The following is a 702-amino-acid chain: NAD(P)H-quinone oxidoreductase subunit 5, chloroplastic (702 aa).

The next 16 helical transmembrane spans lie at 7-27, 40-60, 91-111, 124-144, 147-167, 189-209, 224-244, 258-278, 289-309, 327-347, 354-374, 395-415, 427-447, 511-531, 562-582, and 680-700; these read YVWI…LGLI, SAIL…TVLW, PLSA…MIYT, FFAY…SPNL, VYAF…FWFT, LLLG…DIVA, VLLT…SAQF, TPIS…YLVA, LVMD…ATVA, LGYM…FHLI, ALLF…VGYN, GVTF…ACFW, KLPV…FYMF, IPLI…APLP, FAIT…IAWI, and IFVL…FNFF.

It belongs to the complex I subunit 5 family. As to quaternary structure, NDH is composed of at least 16 different subunits, 5 of which are encoded in the nucleus.

Its subcellular location is the plastid. It is found in the chloroplast thylakoid membrane. The enzyme catalyses a plastoquinone + NADH + (n+1) H(+)(in) = a plastoquinol + NAD(+) + n H(+)(out). It catalyses the reaction a plastoquinone + NADPH + (n+1) H(+)(in) = a plastoquinol + NADP(+) + n H(+)(out). NDH shuttles electrons from NAD(P)H:plastoquinone, via FMN and iron-sulfur (Fe-S) centers, to quinones in the photosynthetic chain and possibly in a chloroplast respiratory chain. The immediate electron acceptor for the enzyme in this species is believed to be plastoquinone. Couples the redox reaction to proton translocation, and thus conserves the redox energy in a proton gradient. The polypeptide is NAD(P)H-quinone oxidoreductase subunit 5, chloroplastic (ndhF) (Zygnema circumcarinatum (Green alga)).